Consider the following 174-residue polypeptide: MAGANTAGVDKEMVTQALNAELQDKGFLLTSAEDIINWARTGSLHWMTFGLACCAVEMMHTSMPRYDAERFGIAPRASPRQSDVMIVAGTLTNKMAPALRKVYDQMPEPRYVISMGSCANGGGYYHYSYSVVRGCDRIVPVDIYVPGCPPTAEALLYGLMQLQRKIRRTGTLVR.

Residues Cys-53, Cys-54, Cys-118, and Cys-148 each coordinate [4Fe-4S] cluster.

The protein belongs to the complex I 20 kDa subunit family. NDH-1 is composed of 14 different subunits. Subunits NuoB, C, D, E, F, and G constitute the peripheral sector of the complex. [4Fe-4S] cluster is required as a cofactor.

Its subcellular location is the cell inner membrane. It catalyses the reaction a quinone + NADH + 5 H(+)(in) = a quinol + NAD(+) + 4 H(+)(out). In terms of biological role, NDH-1 shuttles electrons from NADH, via FMN and iron-sulfur (Fe-S) centers, to quinones in the respiratory chain. Couples the redox reaction to proton translocation (for every two electrons transferred, four hydrogen ions are translocated across the cytoplasmic membrane), and thus conserves the redox energy in a proton gradient. This Ruegeria sp. (strain TM1040) (Silicibacter sp.) protein is NADH-quinone oxidoreductase subunit B.